A 421-amino-acid polypeptide reads, in one-letter code: MAARKQSSQPSRTPVSYEDVAVSFTQEEWEYLTSTQKTLYQKVMSETFKNLTFVGSKKKPQEPSSDLQDKNEEQEKSSSCTGVFKGGPFFFCLTCGKCFKKNTFLFNHQFPVRSRRLAVTNPQSRKGKGYKAQHRGERPFFCNFCGKTYRDASGLSRHRRAHLGYRPRSCPECGKCFRDQSEVNRHLKVHQNKPAASNQAGNQASNQRLKSRVPPTTPRSQAPALKYVKVIQGPVARAKARNSGASTLNVRSNSITVVRSREKISCPYCHITFTMRTCLLTHLKIHFRRQPNQHFCCKESAHSSNTLRMQKIYTCPVCDSSFRGKESLLDHLCCQRPIRFSKCWEILGHLLGYLHEPVVLGNIFKVRDSSGKRMESRRRRRKRACTENPETEGLSGKGRVAPWEMEGATSPESPVTEEDSD.

Residues 15-88 (VSYEDVAVSF…SCTGVFKGGP (74 aa)) form the KRAB domain. The C2H2-type 1; degenerate zinc-finger motif lies at 90-113 (FFCLTCGKCFKKNTFLFNHQFPVR). C2H2-type zinc fingers lie at residues 140–162 (FFCN…RRAH) and 168–190 (RSCP…LKVH). Residues 191 to 221 (QNKPAASNQAGNQASNQRLKSRVPPTTPRSQ) form a disordered region. Low complexity predominate over residues 195–207 (AASNQAGNQASNQ). Residues 264–286 (ISCPYCHITFTMRTCLLTHLKIH) form a C2H2-type 4 zinc finger. A C2H2-type 5; degenerate zinc finger spans residues 313-332 (YTCPVCDSSFRGKESLLDHL). Residues 371 to 421 (GKRMESRRRRRKRACTENPETEGLSGKGRVAPWEMEGATSPESPVTEEDSD) are disordered.

The protein belongs to the krueppel C2H2-type zinc-finger protein family. In terms of tissue distribution, expressed in oocytes and in a subset of adult tissues. Expressed at high levels in testis, and at low levels in cerebellum. Present in sciatic nerve and spinal cord (at protein level).

It is found in the nucleus. In terms of biological role, transcription regulator required to maintain maternal and paternal gene imprinting, a process by which gene expression is restricted in a parent of origin-specific manner by epigenetic modification of genomic DNA and chromatin, including DNA methylation. Acts by controlling DNA methylation during the earliest multicellular stages of development at multiple imprinting control regions (ICRs). Acts together with ZNF445, but ZFP57 plays the predominant role in imprinting maintenance. In contrast, in humans, ZNF445 seems to be the major factor early embryonic imprinting maintenance. Required for the establishment of maternal methylation imprints at SNRPN locus. Acts as a transcriptional repressor in Schwann cells. Binds to a 5'-TGCCGC-3' consensus sequence and recognizes the methylated CpG within this element. This Mus musculus (Mouse) protein is Zinc finger protein 57 (Zfp57).